Here is an 829-residue protein sequence, read N- to C-terminus: MDEVSPTKHFTSKPLLPTKTPRDKAISHYVNALNSPRNVVKTEIPECGIQIIDGDGNFASTDTRERPSLKNYILSKPEFLKRGMDYNAVGILGAQSSGKSTLLNYLFNTKFRILNEVMGRSRTTHGVWMALSGKESNIVVFDLEGTDGSAREDDYSFERKTSLFSLSVCSVLMVNLWSHDVGRFQASNMSLLKTVFELNLQLFVKEETPKTLIVFVIRDREADTPFDQIERDIMEDIMRIWDSVIPPEKFINSPINRFFDFQFTSLPHYEHFYENFVEEVNLMKKKFDPKNKETYFLPQYNKEIPADGLSCFCEQIWETIKDNKDLDLPSQREMLSRYRCTEISNQIYKEFNDSIKGEMKTLKKGNIIEEFKKIMTKEIDTAIEKYKEVTERYMESIVEEIEEQLKKQLYGLVESLFERQAELMEKAIGKRVKGEFTIIRNEYALLYNKKEFNPMKYQKYSQELSRTKAVIERDWRKQFDESVPKFLAEKTKEKFNSVCKDIGIAYEDAVSKMAEVMKQHFGDYLESTIKPKITPYLEACKKDMWKNIRNVINTQFTNGFNKLEEGFKTCSNMNKDTIEEEIKKSKIDILNIIKELVIKRKTELPYLLERKFNNIFRFDNKGLPRKWEPTDDVDTLYFTARDETEDILDMYCYFRIEENDDQFKFTINYRDGDLPSESIEALPEGADEDKIILNHQERKELIETLNEFFEKGYLIALREKENSEIKYQIPLYLIVLVIFFGFDEFIAILTNPLLFILTLIIGGGIYIGYKLNLGGVAKNYIQYLLSMSLSSTMEYLRTIPFFTPLIDKIWPKDDNKDDDSTEETQEETK.

The disordered stretch occupies residues 1-21; sequence MDEVSPTKHFTSKPLLPTKTP. Topologically, residues 1-728 are cytoplasmic; that stretch reads MDEVSPTKHF…EKENSEIKYQ (728 aa). One can recognise a GB1/RHD3-type G domain in the interval 83–305; sequence GMDYNAVGIL…FLPQYNKEIP (223 aa). 93–100 provides a ligand contact to GTP; it reads GAQSSGKS. 2 coiled-coil regions span residues 372 to 396 and 576 to 596; these read KKIM…YMES and DTIE…IKEL. A helical membrane pass occupies residues 729–749; that stretch reads IPLYLIVLVIFFGFDEFIAIL. Residues 750–752 are Lumenal-facing; that stretch reads TNP. Residues 753–773 form a helical membrane-spanning segment; it reads LLFILTLIIGGGIYIGYKLNL. Over 774 to 829 the chain is Cytoplasmic; the sequence is GGVAKNYIQYLLSMSLSSTMEYLRTIPFFTPLIDKIWPKDDNKDDDSTEETQEETK.

The protein belongs to the TRAFAC class dynamin-like GTPase superfamily. GB1/RHD3 GTPase family. RHD3 subfamily.

The protein localises to the endoplasmic reticulum membrane. In terms of biological role, probable GTP-binding protein that may be involved in cell development. The protein is Protein SEY1 homolog 2 of Entamoeba dispar (strain ATCC PRA-260 / SAW760).